Consider the following 410-residue polypeptide: MNVYLVGGAVRDSLLGLPVTEKDWVVVGATPKEMEANGFRPVGKDFPVFLHPKTQEEYALARTERKSGHGYGGFTFHAASTVSLEEDLIRRDLTINAMAQARGGEIIDPFNGRVDLKARLLRHVSPAFAEDPLRVLRVARFAARYHWLGFQVADDTLMLMKQLSDSGELGYLVAERVWKETSRALMERDPQVFFQVLHRCGALHALFPELAALDGVPQPEQHHPEVDTLLHQFLCLKQAARLGLSLNARYALLCHDLGKGKTPKEEWPRHIAHEIRSARLSKKVSKRLKVPKEAATLATLVAEFHTHSHRALELKPATVWKLFKSLDILRRPERLTDFLGACEADARGRTSFENREYPQASYLQGAADAARQVDIQALQAQGHEGPALGEAIEQARIDAIATFKQQELNP.

The ATP site is built by G8 and R11. G8 and R11 together coordinate CTP. Mg(2+)-binding residues include E21 and D23. R91, R137, and R140 together coordinate ATP. 3 residues coordinate CTP: R91, R137, and R140. The region spanning T228–L329 is the HD domain.

Belongs to the tRNA nucleotidyltransferase/poly(A) polymerase family. Bacterial CCA-adding enzyme type 1 subfamily. Monomer. Can also form homodimers and oligomers. Mg(2+) serves as cofactor. Ni(2+) is required as a cofactor.

It catalyses the reaction a tRNA precursor + 2 CTP + ATP = a tRNA with a 3' CCA end + 3 diphosphate. The catalysed reaction is a tRNA with a 3' CCA end + 2 CTP + ATP = a tRNA with a 3' CCACCA end + 3 diphosphate. Catalyzes the addition and repair of the essential 3'-terminal CCA sequence in tRNAs without using a nucleic acid template. Adds these three nucleotides in the order of C, C, and A to the tRNA nucleotide-73, using CTP and ATP as substrates and producing inorganic pyrophosphate. tRNA 3'-terminal CCA addition is required both for tRNA processing and repair. Also involved in tRNA surveillance by mediating tandem CCA addition to generate a CCACCA at the 3' terminus of unstable tRNAs. While stable tRNAs receive only 3'-terminal CCA, unstable tRNAs are marked with CCACCA and rapidly degraded. The protein is Multifunctional CCA protein of Alcanivorax borkumensis (strain ATCC 700651 / DSM 11573 / NCIMB 13689 / SK2).